Consider the following 343-residue polypeptide: C-X-C chemokine receptor type 6 (343 aa).

The Extracellular segment spans residues 1-33; the sequence is MAEYDHYEDDGFLNSFNDSSQEEHQDFLQFRKV. Residue asparagine 17 is glycosylated (N-linked (GlcNAc...) asparagine). Residues 34-60 form a helical membrane-spanning segment; the sequence is FLPCMYLVVFVCGLVGNSLVLVISIFY. Over 61-69 the chain is Cytoplasmic; the sequence is HKLQSLTDV. Residues 70-90 form a helical membrane-spanning segment; it reads FLVNLPLADLVFVCTLPFWTY. Topologically, residues 91–104 are extracellular; sequence AGIHEWIFGQVMCK. Cysteine 103 and cysteine 181 are oxidised to a cystine. The helical transmembrane segment at 105–126 threads the bilayer; it reads TLLGVYTINFYTSMLILTCITV. Residues 127 to 144 lie on the Cytoplasmic side of the membrane; the sequence is DRFIVVVKATKAYNQQAK. A helical membrane pass occupies residues 145 to 165; it reads RMTWGKVICLLIWVISLLVSL. The Extracellular portion of the chain corresponds to 166-188; that stretch reads PQIIYGNVFNLDKLICGYHDEEI. A helical transmembrane segment spans residues 189-216; the sequence is STVVLATQMTLGFFLPLLAMIVCYSVII. Topologically, residues 217–232 are cytoplasmic; the sequence is KTLLHAGGFQKHRSLK. Residues 233–260 traverse the membrane as a helical segment; sequence IIFLVMAVFLLTQTPFNLVKLIRSTRWE. The Extracellular segment spans residues 261-276; that stretch reads YYAMTSFHYTIIVTEA. A helical transmembrane segment spans residues 277–294; the sequence is IAYLRACLNPVLYAFVSL. Residues 295–343 lie on the Cytoplasmic side of the membrane; that stretch reads KFRKNFWKLVKDIGCLPYLGVSHQWKSSEDNSKTFSASHNVEATSMFQL.

It belongs to the G-protein coupled receptor 1 family.

Its subcellular location is the cell membrane. Its function is as follows. Receptor for the C-X-C chemokine CXCL16. Used as a coreceptor by SIVs and by strains of HIV-2 and m-tropic HIV-1. In Macaca fascicularis (Crab-eating macaque), this protein is C-X-C chemokine receptor type 6 (CXCR6).